Consider the following 281-residue polypeptide: MEMO1 family protein PAE0818 (281 aa).

This sequence belongs to the MEMO1 family.

The sequence is that of MEMO1 family protein PAE0818 from Pyrobaculum aerophilum (strain ATCC 51768 / DSM 7523 / JCM 9630 / CIP 104966 / NBRC 100827 / IM2).